Consider the following 475-residue polypeptide: tRNA modification GTPase MnmE (475 aa).

Arginine 24, glutamate 81, and lysine 124 together coordinate (6S)-5-formyl-5,6,7,8-tetrahydrofolate. One can recognise a TrmE-type G domain in the interval 220-397 (GLSVVLAGQP…LRRELLRLVG (178 aa)). Residue asparagine 230 coordinates K(+). GTP-binding positions include 230-235 (NVGKSS), 249-255 (TPIAGTT), 274-277 (DTAG), and 378-380 (SAR). Serine 234 contacts Mg(2+). 3 residues coordinate K(+): threonine 249, isoleucine 251, and threonine 254. Threonine 255 serves as a coordination point for Mg(2+). Lysine 475 contacts (6S)-5-formyl-5,6,7,8-tetrahydrofolate.

It belongs to the TRAFAC class TrmE-Era-EngA-EngB-Septin-like GTPase superfamily. TrmE GTPase family. Homodimer. Heterotetramer of two MnmE and two MnmG subunits. K(+) is required as a cofactor.

It is found in the cytoplasm. Its function is as follows. Exhibits a very high intrinsic GTPase hydrolysis rate. Involved in the addition of a carboxymethylaminomethyl (cmnm) group at the wobble position (U34) of certain tRNAs, forming tRNA-cmnm(5)s(2)U34. The polypeptide is tRNA modification GTPase MnmE (Cupriavidus necator (strain ATCC 17699 / DSM 428 / KCTC 22496 / NCIMB 10442 / H16 / Stanier 337) (Ralstonia eutropha)).